Reading from the N-terminus, the 228-residue chain is Ribonuclease 3 (228 aa).

An RNase III domain is found at 2-130 (LTYLEQKINY…LLAAVYLDGG (129 aa)). Glu-43 serves as a coordination point for Mg(2+). Asp-47 is an active-site residue. Mg(2+) contacts are provided by Asp-116 and Glu-119. The active site involves Glu-119. The DRBM domain maps to 157–226 (DYKTRLQEVV…AMEALSKLGI (70 aa)).

Belongs to the ribonuclease III family. Homodimer. The cofactor is Mg(2+).

It is found in the cytoplasm. The enzyme catalyses Endonucleolytic cleavage to 5'-phosphomonoester.. Functionally, digests double-stranded RNA. Involved in the processing of primary rRNA transcript to yield the immediate precursors to the large and small rRNAs (23S and 16S). Processes some mRNAs, and tRNAs when they are encoded in the rRNA operon. Processes pre-crRNA and tracrRNA of type II CRISPR loci if present in the organism. This is Ribonuclease 3 from Caldanaerobacter subterraneus subsp. tengcongensis (strain DSM 15242 / JCM 11007 / NBRC 100824 / MB4) (Thermoanaerobacter tengcongensis).